A 425-amino-acid polypeptide reads, in one-letter code: Probable sucrose-phosphatase 3a (425 aa).

Belongs to the sucrose phosphatase family. Homodimer. Mg(2+) serves as cofactor.

The catalysed reaction is sucrose 6(F)-phosphate + H2O = sucrose + phosphate. The protein operates within glycan biosynthesis; sucrose biosynthesis; sucrose from D-fructose 6-phosphate and UDP-alpha-D-glucose: step 2/2. Its function is as follows. Catalyzes the final step of sucrose synthesis. The protein is Probable sucrose-phosphatase 3a (SPP3A) of Arabidopsis thaliana (Mouse-ear cress).